The primary structure comprises 75 residues: Large ribosomal subunit protein bL31 (75 aa).

The protein belongs to the bacterial ribosomal protein bL31 family. Type A subfamily. Part of the 50S ribosomal subunit.

In terms of biological role, binds the 23S rRNA. The sequence is that of Large ribosomal subunit protein bL31 from Rhodopseudomonas palustris (strain BisB18).